An 85-amino-acid polypeptide reads, in one-letter code: U5-theraphotoxin-Hhn1a (85 aa).

An N-terminal signal peptide occupies residues 1 to 21 (MKSQIFFAVAALFLLTVRTYA). Residues 22–49 (SKSKEQDLRDALFSAMFSADNQLNPQER) constitute a propeptide that is removed on maturation. Intrachain disulfides connect Cys51–Cys65, Cys58–Cys70, and Cys64–Cys77.

This sequence belongs to the neurotoxin 10 (Hwtx-1) family. 18 (Hntx-VII) subfamily. As to expression, expressed by the venom gland.

It is found in the secreted. Ion channel impairing toxin that inhibits voltage-gated sodium channels. The recombinantly expressed toxin shows a weak activity against Nav1.7/SCN9A, and shifts the voltage dependence of channel activation to more depolarized potentials. The chain is U5-theraphotoxin-Hhn1a from Cyriopagopus hainanus (Chinese bird spider).